The primary structure comprises 284 residues: 2-dehydro-3-deoxyphosphooctonate aldolase (284 aa).

Belongs to the KdsA family.

The protein localises to the cytoplasm. The enzyme catalyses D-arabinose 5-phosphate + phosphoenolpyruvate + H2O = 3-deoxy-alpha-D-manno-2-octulosonate-8-phosphate + phosphate. The protein operates within carbohydrate biosynthesis; 3-deoxy-D-manno-octulosonate biosynthesis; 3-deoxy-D-manno-octulosonate from D-ribulose 5-phosphate: step 2/3. It participates in bacterial outer membrane biogenesis; lipopolysaccharide biosynthesis. This Erwinia tasmaniensis (strain DSM 17950 / CFBP 7177 / CIP 109463 / NCPPB 4357 / Et1/99) protein is 2-dehydro-3-deoxyphosphooctonate aldolase.